The following is a 599-amino-acid chain: MTDLSHIRNFSIIAHIDHGKSTLADRFIQHCGGLSAREMEAQVLDSMDIERERGITIKAQSVTLSYTSKSGKVYQLNFIDTPGHVDFSYEVSRSLAACEGALLVVDAAQGVEAQSVANCYTALDQGLEVIPVLNKIDLPQAEPERVASEIEDIIGIDATDAVRCSAKSGLGIEDVLEVLIKSVPAPVGDIDAPLQALIIDSWFDNYLGVVSLVRVTQGCLKTKDKIILKSLGKPHVVDMVGVFTPKRKETGILKAGEVGFVVAGIKEILGAPVGDTITHASTSTVPQLPGFKKVKPQVYAGLFPVSSDDYENFRDALGKLTLNDASLFYEPESSEALGFGFRCGFLGMLHMEIIQERLEREYDLDLITTAPTVIYEVEKNDGSVVYVDNPSKLPDLGTIAEMREPIVEANMLMPQAYLGAVITLCIEKRGVQKDMQYLGGQVALKYELPMAEVVLDFFDKLKSVSRGFASLDYNFVRFEAAKLVRLDVLINSEKVDALALIVHRDTAQYKGRSLADKMKELIPRQMFDVAIQAAIGGQVVARTTVKALRKNVIAKCYGGDVSRKKKLLEKQKAGKKRMKQVGRVEIPQEAFLAVLKVDS.

In terms of domain architecture, tr-type G spans 5 to 187 (SHIRNFSIIA…VLIKSVPAPV (183 aa)). GTP contacts are provided by residues 17 to 22 (DHGKST) and 134 to 137 (NKID).

Belongs to the TRAFAC class translation factor GTPase superfamily. Classic translation factor GTPase family. LepA subfamily.

The protein localises to the cell inner membrane. The catalysed reaction is GTP + H2O = GDP + phosphate + H(+). Functionally, required for accurate and efficient protein synthesis under certain stress conditions. May act as a fidelity factor of the translation reaction, by catalyzing a one-codon backward translocation of tRNAs on improperly translocated ribosomes. Back-translocation proceeds from a post-translocation (POST) complex to a pre-translocation (PRE) complex, thus giving elongation factor G a second chance to translocate the tRNAs correctly. Binds to ribosomes in a GTP-dependent manner. The sequence is that of Elongation factor 4 from Saccharophagus degradans (strain 2-40 / ATCC 43961 / DSM 17024).